The primary structure comprises 417 residues: L-rhamnose isomerase (417 aa).

Residues H261, D293, and D295 each contribute to the Mn(2+) site.

Belongs to the rhamnose isomerase family. Mn(2+) serves as cofactor.

Its subcellular location is the cytoplasm. It carries out the reaction L-rhamnopyranose = L-rhamnulose. It functions in the pathway carbohydrate degradation; L-rhamnose degradation; glycerone phosphate from L-rhamnose: step 1/3. In terms of biological role, catalyzes the interconversion of L-rhamnose and L-rhamnulose. The chain is L-rhamnose isomerase from Oceanobacillus iheyensis (strain DSM 14371 / CIP 107618 / JCM 11309 / KCTC 3954 / HTE831).